The sequence spans 1101 residues: Helicase POLQ-like (1101 aa).

Residues 212–261 are disordered; sequence DLGDHSMKERDWKSSSHNTVNEELPHNCIEQPQQNDESSSKVRTSSDMNR. Residues 213–225 are compositionally biased toward basic and acidic residues; the sequence is LGDHSMKERDWKS. Over residues 241-258 the composition is skewed to polar residues; that stretch reads EQPQQNDESSSKVRTSSD. The 173-residue stretch at 346 to 518 folds into the Helicase ATP-binding domain; sequence LNSVQERKNL…FLQAEYYTSQ (173 aa). 359-366 provides a ligand contact to ATP; sequence LPTSGGKT. The short motif at 463–466 is the DEAH box element; that stretch reads DELH. The region spanning 566–758 is the Helicase C-terminal domain; sequence HLVALVTEVI…EFTKGIQTLF (193 aa).

Belongs to the helicase family. SKI2 subfamily. As to quaternary structure, homodimer. Interacts with POLN. Interacts with RAD51B and RAD51C; promoting association with the BCDX2 complex. Interacts with the replication protein A (RPA/RP-A) complex. Interacts with RAD51; stimulating HELQ DNA helicase activity and ability to unwing DNA.

The protein localises to the nucleus. Its subcellular location is the chromosome. It catalyses the reaction Couples ATP hydrolysis with the unwinding of duplex DNA by translocating in the 3'-5' direction.. The catalysed reaction is ATP + H2O = ADP + phosphate + H(+). Its activity is regulated as follows. ATPase activity is strongly stimulated by single-stranded DNA. Presence of ATP and Mg cofactor are required for helicase activity allowing to unwind duplex oligonucleotides up to 60-70-mer. This helicase activity is stimulated by replication protein A (RPA/RP-A) complex that binds to unwound regions and inhibits re-annealing. In terms of biological role, single-stranded 3'-5' DNA helicase that plays a key role in homology-driven double-strand break (DSB) repair. Involved in different DSB repair mechanisms that are guided by annealing of extensive stretches of complementary bases at break ends, such as microhomology-mediated end-joining (MMEJ), single-strand annealing (SSA) or synthesis-dependent strand annealing (SDSA). Possesses both DNA unwinding and annealing activities. Forms a complex with RAD51, stimulating HELQ DNA helicase activity and ability to unwing DNA. Efficiently unwinds substrates containing 3' overhangs or a D-loop. In contrast, interaction with the replication protein A (RPA/RP-A) complex inhibits DNA unwinding by HELQ but strongly stimulates DNA strand annealing. Triggers displacement of RPA from single-stranded DNA to facilitate annealing of complementary sequences. This chain is Helicase POLQ-like, found in Homo sapiens (Human).